Here is a 28-residue protein sequence, read N- to C-terminus: MRQFEFEAKASNSINRFYFGFGNESFWS.

The protein resides in the host cytoplasm. Its subcellular location is the host cytoskeleton. Plays a role in the reorganization of host microtubules and intermediate filaments to form a cytoskeletal cage that surrounds the viral factories, protecting the site of viral replication. May play a role in viral infection of human cortical neurons. In Zika virus (isolate ZIKV/Human/French Polynesia/10087PF/2013) (ZIKV), this protein is uORF1 protein.